The sequence spans 2157 residues: DExH-box ATP-dependent RNA helicase DExH14 (2157 aa).

A disordered region spans residues 374 to 394 (KAASNTQSRMPTYGTQVTVQT). Residues 375–394 (AASNTQSRMPTYGTQVTVQT) show a composition bias toward polar residues. One can recognise a Helicase ATP-binding 1 domain in the interval 517–699 (QTVYHTNENI…FLRVNTDTGL (183 aa)). 530–537 (APTGAGKT) is a binding site for ATP. A DEVH box motif is present at residues 641 to 644 (DEVH). Positions 734 to 932 (CYKKVVDSIK…SLKDNLNAEV (199 aa)) constitute a Helicase C-terminal 1 domain. The SEC63 1 domain maps to 1008–1315 (CTELGRVASH…LHAETYFTIS (308 aa)). The Helicase ATP-binding 2 domain maps to 1365–1540 (HVLYHTDNNV…WLGVGEIGLF (176 aa)). ATP is bound at residue 1378–1385 (APTGSGKT). A DEIH box motif is present at residues 1482 to 1485 (DEIH). In terms of domain architecture, Helicase C-terminal 2 spans 1571 to 1780 (NKPAYAAICT…GTIGNKEDAV (210 aa)). Residues 1839–2150 (PTMLGTIASQ…YLGFEQEHSI (312 aa)) form the SEC63 2 domain.

It belongs to the DExH box helicase family.

The protein localises to the nucleus. The catalysed reaction is ATP + H2O = ADP + phosphate + H(+). RNA helicase that plays an essential role in pre-mRNA splicing as component of the U5 snRNP and U4/U6-U5 tri-snRNP complexes. Involved in spliceosome assembly, activation and disassembly. The protein is DExH-box ATP-dependent RNA helicase DExH14 of Arabidopsis thaliana (Mouse-ear cress).